The following is an 82-amino-acid chain: Sulfur carrier protein TusA (82 aa).

Cys-19 (cysteine persulfide intermediate) is an active-site residue.

The protein belongs to the sulfur carrier protein TusA family.

The protein localises to the cytoplasm. Functionally, sulfur carrier protein which probably makes part of a sulfur-relay system. In Tolumonas auensis (strain DSM 9187 / NBRC 110442 / TA 4), this protein is Sulfur carrier protein TusA.